The primary structure comprises 85 residues: uncharacterized protein (85 aa).

Transmembrane regions (helical) follow at residues 14–34 (FLFG…RATI) and 60–80 (IFVY…IYFL).

It localises to the cell membrane. This is an uncharacterized protein from Escherichia coli O157:H7.